The following is a 196-amino-acid chain: Holliday junction branch migration complex subunit RuvA (196 aa).

The segment at 1–63 (MINKIYGKII…EDEIKLFGFL (63 aa)) is domain I. The tract at residues 64 to 138 (NVSEREVFEE…GKLVKADELT (75 aa)) is domain II. Threonine 138 is a region of interest (flexible linker). The interval 139-196 (SSVFKFKDLEQSIVNMGFDRKLVVAAIKEIMLIDEFLMLREVEQEQFLFRETLKRLSG) is domain III.

This sequence belongs to the RuvA family. In terms of assembly, homotetramer. Forms an RuvA(8)-RuvB(12)-Holliday junction (HJ) complex. HJ DNA is sandwiched between 2 RuvA tetramers; dsDNA enters through RuvA and exits via RuvB. An RuvB hexamer assembles on each DNA strand where it exits the tetramer. Each RuvB hexamer is contacted by two RuvA subunits (via domain III) on 2 adjacent RuvB subunits; this complex drives branch migration. In the full resolvosome a probable DNA-RuvA(4)-RuvB(12)-RuvC(2) complex forms which resolves the HJ.

It is found in the cytoplasm. In terms of biological role, the RuvA-RuvB-RuvC complex processes Holliday junction (HJ) DNA during genetic recombination and DNA repair, while the RuvA-RuvB complex plays an important role in the rescue of blocked DNA replication forks via replication fork reversal (RFR). RuvA specifically binds to HJ cruciform DNA, conferring on it an open structure. The RuvB hexamer acts as an ATP-dependent pump, pulling dsDNA into and through the RuvAB complex. HJ branch migration allows RuvC to scan DNA until it finds its consensus sequence, where it cleaves and resolves the cruciform DNA. The sequence is that of Holliday junction branch migration complex subunit RuvA from Borrelia hermsii (strain HS1 / DAH).